An 899-amino-acid polypeptide reads, in one-letter code: Protein translocase subunit SecA (899 aa).

ATP is bound by residues Gln87, 105–109, and Asp516; that span reads GEGKT. Residues Cys884, Cys886, Cys895, and His896 each coordinate Zn(2+).

It belongs to the SecA family. In terms of assembly, monomer and homodimer. Part of the essential Sec protein translocation apparatus which comprises SecA, SecYEG and auxiliary proteins SecDF. Other proteins may also be involved. Zn(2+) serves as cofactor.

The protein localises to the cell inner membrane. Its subcellular location is the cytoplasm. It carries out the reaction ATP + H2O + cellular proteinSide 1 = ADP + phosphate + cellular proteinSide 2.. Part of the Sec protein translocase complex. Interacts with the SecYEG preprotein conducting channel. Has a central role in coupling the hydrolysis of ATP to the transfer of proteins into and across the cell membrane, serving as an ATP-driven molecular motor driving the stepwise translocation of polypeptide chains across the membrane. The chain is Protein translocase subunit SecA from Borreliella burgdorferi (strain ZS7) (Borrelia burgdorferi).